We begin with the raw amino-acid sequence, 522 residues long: Glutamate--cysteine ligase (522 aa).

The protein belongs to the glutamate--cysteine ligase type 1 family. Type 1 subfamily.

It catalyses the reaction L-cysteine + L-glutamate + ATP = gamma-L-glutamyl-L-cysteine + ADP + phosphate + H(+). Its pathway is sulfur metabolism; glutathione biosynthesis; glutathione from L-cysteine and L-glutamate: step 1/2. The protein is Glutamate--cysteine ligase of Vibrio parahaemolyticus serotype O3:K6 (strain RIMD 2210633).